A 446-amino-acid polypeptide reads, in one-letter code: Probable glycine dehydrogenase (decarboxylating) subunit 1 (446 aa).

Belongs to the GcvP family. N-terminal subunit subfamily. As to quaternary structure, the glycine cleavage system is composed of four proteins: P, T, L and H. In this organism, the P 'protein' is a heterodimer of two subunits.

The catalysed reaction is N(6)-[(R)-lipoyl]-L-lysyl-[glycine-cleavage complex H protein] + glycine + H(+) = N(6)-[(R)-S(8)-aminomethyldihydrolipoyl]-L-lysyl-[glycine-cleavage complex H protein] + CO2. Functionally, the glycine cleavage system catalyzes the degradation of glycine. The P protein binds the alpha-amino group of glycine through its pyridoxal phosphate cofactor; CO(2) is released and the remaining methylamine moiety is then transferred to the lipoamide cofactor of the H protein. The protein is Probable glycine dehydrogenase (decarboxylating) subunit 1 of Protochlamydia amoebophila (strain UWE25).